The sequence spans 93 residues: YcgL domain-containing protein Swoo_2115 (93 aa).

The YcgL domain occupies 1–85 (MICAVYKSRR…PVVNLLEEHK (85 aa)).

In Shewanella woodyi (strain ATCC 51908 / MS32), this protein is YcgL domain-containing protein Swoo_2115.